A 152-amino-acid polypeptide reads, in one-letter code: Siroheme decarboxylase beta subunit (152 aa).

This sequence belongs to the Ahb/Nir family. Forms a heterodimer composed of AhbA and AhbB.

The enzyme catalyses siroheme + 2 H(+) = 12,18-didecarboxysiroheme + 2 CO2. The protein operates within porphyrin-containing compound metabolism; protoheme biosynthesis. With respect to regulation, binds heme b. The redox state of the heme b modulates the activity of the enzyme. Activity is stimulated by sodium dithionite. Functionally, involved in siroheme-dependent heme b biosynthesis. Catalyzes the decarboxylation of siroheme into didecarboxysiroheme. The polypeptide is Siroheme decarboxylase beta subunit (Methanosarcina barkeri (strain Fusaro / DSM 804)).